A 62-amino-acid chain; its full sequence is Large ribosomal subunit protein bL28 (62 aa).

This sequence belongs to the bacterial ribosomal protein bL28 family.

This is Large ribosomal subunit protein bL28 from Wolinella succinogenes (strain ATCC 29543 / DSM 1740 / CCUG 13145 / JCM 31913 / LMG 7466 / NCTC 11488 / FDC 602W) (Vibrio succinogenes).